Here is a 156-residue protein sequence, read N- to C-terminus: ATP synthase subunit b', organellar chromatophore (156 aa).

The helical transmembrane segment at 23–43 (TLPLMAIQVVFLTFILNAIFF) threads the bilayer.

Belongs to the ATPase B chain family. F-type ATPases have 2 components, F(1) - the catalytic core - and F(0) - the membrane proton channel. F(1) has five subunits: alpha(3), beta(3), gamma(1), delta(1), epsilon(1). F(0) has four main subunits: a(1), b(1), b'(1) and c(10-14). The alpha and beta chains form an alternating ring which encloses part of the gamma chain. F(1) is attached to F(0) by a central stalk formed by the gamma and epsilon chains, while a peripheral stalk is formed by the delta, b and b' chains.

The protein localises to the plastid. It localises to the organellar chromatophore thylakoid membrane. Its function is as follows. F(1)F(0) ATP synthase produces ATP from ADP in the presence of a proton or sodium gradient. F-type ATPases consist of two structural domains, F(1) containing the extramembraneous catalytic core and F(0) containing the membrane proton channel, linked together by a central stalk and a peripheral stalk. During catalysis, ATP synthesis in the catalytic domain of F(1) is coupled via a rotary mechanism of the central stalk subunits to proton translocation. Functionally, component of the F(0) channel, it forms part of the peripheral stalk, linking F(1) to F(0). The b'-subunit is a diverged and duplicated form of b found in plants and photosynthetic bacteria. The polypeptide is ATP synthase subunit b', organellar chromatophore (Paulinella chromatophora).